The following is a 200-amino-acid chain: Probable GTP-binding protein EngB (200 aa).

The EngB-type G domain occupies 24 to 198 (EGMEVAFAGR…QAQLDEWLGI (175 aa)). GTP contacts are provided by residues 32 to 39 (GRSNVGKS), 59 to 63 (GRTQM), 77 to 80 (DLPG), 144 to 147 (TKSD), and 177 to 179 (FSA). Residues S39 and T61 each coordinate Mg(2+).

This sequence belongs to the TRAFAC class TrmE-Era-EngA-EngB-Septin-like GTPase superfamily. EngB GTPase family. Requires Mg(2+) as cofactor.

Its function is as follows. Necessary for normal cell division and for the maintenance of normal septation. This chain is Probable GTP-binding protein EngB, found in Nitrosococcus oceani (strain ATCC 19707 / BCRC 17464 / JCM 30415 / NCIMB 11848 / C-107).